Reading from the N-terminus, the 510-residue chain is Xylose import ATP-binding protein XylG (510 aa).

ABC transporter domains follow at residues 5–242 (LEMK…VGRE) and 259–505 (LRVE…LRSE). An ATP-binding site is contributed by 37–44 (GENGSGKS).

Belongs to the ABC transporter superfamily. Xylose importer (TC 3.A.1.2.4) family. In terms of assembly, the complex is composed of two ATP-binding proteins (XylG), two transmembrane proteins (XylH) and a solute-binding protein (XylF).

The protein localises to the cell inner membrane. It carries out the reaction D-xylose(out) + ATP + H2O = D-xylose(in) + ADP + phosphate + H(+). In terms of biological role, part of the ABC transporter complex XylFGH involved in xylose import. Responsible for energy coupling to the transport system. The sequence is that of Xylose import ATP-binding protein XylG from Yersinia pestis.